The following is a 312-amino-acid chain: Very-long-chain 3-oxoacyl-CoA reductase (312 aa).

Residues 4–24 (ALPAAGFLYWVGASTIAYLTL) traverse the membrane as a helical segment. 50–79 (GEWAVVTGGTDGIGKSYAEELAKRGMKIVL) lines the NADP(+) pocket. A run of 2 helical transmembrane segments spans residues 182–202 (GVIL…LTVY) and 271–291 (GYVI…WIYF). Ser-189 is a binding site for substrate. Residue Tyr-202 is the Proton acceptor of the active site. The short motif at 308-312 (KTKKN) is the Di-lysine motif element.

This sequence belongs to the short-chain dehydrogenases/reductases (SDR) family. 17-beta-HSD 3 subfamily.

It is found in the endoplasmic reticulum membrane. It catalyses the reaction a very-long-chain (3R)-3-hydroxyacyl-CoA + NADP(+) = a very-long-chain 3-oxoacyl-CoA + NADPH + H(+). The enzyme catalyses 17beta-estradiol + NAD(+) = estrone + NADH + H(+). It carries out the reaction 17beta-estradiol + NADP(+) = estrone + NADPH + H(+). The catalysed reaction is 3-oxooctadecanoyl-CoA + NADPH + H(+) = (3R)-hydroxyoctadecanoyl-CoA + NADP(+). It catalyses the reaction (7Z,10Z,13Z,16Z)-3-oxodocosatetraenoyl-CoA + NADPH + H(+) = (3R)-hydroxy-(7Z,10Z,13Z,16Z)-docosatetraenoyl-CoA + NADP(+). The enzyme catalyses 3-oxo-(7Z,10Z,13Z,16Z,19Z)-docosapentaenoyl-CoA + NADPH + H(+) = (3R)-hydroxy-(7Z,10Z,13Z,16Z,19Z)-docosapentaenoyl-CoA + NADP(+). It carries out the reaction (8Z,11Z,14Z)-3-oxoeicosatrienoyl-CoA + NADPH + H(+) = (3R)-hydroxy-(8Z,11Z,14Z)-eicosatrienoyl-CoA + NADP(+). Its pathway is lipid metabolism; fatty acid biosynthesis. It functions in the pathway steroid biosynthesis; estrogen biosynthesis. Functionally, catalyzes the second of the four reactions of the long-chain fatty acids elongation cycle. This endoplasmic reticulum-bound enzymatic process, allows the addition of two carbons to the chain of long- and very long-chain fatty acids/VLCFAs per cycle. This enzyme has a 3-ketoacyl-CoA reductase activity, reducing 3-ketoacyl-CoA to 3-hydroxyacyl-CoA, within each cycle of fatty acid elongation. Thereby, it may participate in the production of VLCFAs of different chain lengths that are involved in multiple biological processes as precursors of membrane lipids and lipid mediators. May also catalyze the transformation of estrone (E1) into estradiol (E2) and play a role in estrogen formation. This is Very-long-chain 3-oxoacyl-CoA reductase from Rattus norvegicus (Rat).